A 257-amino-acid chain; its full sequence is Reticulon-like protein B4 (257 aa).

Residues 19–42 (IHGHGDSSSLSDSDDDKKSTSSSS) form a disordered region. The region spanning 68–257 (PADIFLWRNK…PRGALNKKKD (190 aa)) is the Reticulon domain. 3 consecutive transmembrane segments (helical) span residues 78–98 (KVSGGVLGAVTASWVLFELFE), 99–119 (YHLLAFLCHFAIFALAALFLW), and 173–193 (FILVIAGLWVLSIIGSCYNFL).

In terms of assembly, interacts with VirB2.

It localises to the endoplasmic reticulum membrane. Its function is as follows. Plays a role in the Agrobacterium-mediated plant transformation via its interaction with VirB2, the major component of the T-pilus. The sequence is that of Reticulon-like protein B4 (RTNLB4) from Arabidopsis thaliana (Mouse-ear cress).